A 395-amino-acid chain; its full sequence is General transcription factor IIH subunit 2 (395 aa).

The VWFA domain maps to 60 to 236 (HLYVVVDGSR…HYKELLTHHV (177 aa)). Tyrosine 95 is modified (phosphotyrosine). A C4-type zinc finger spans residues 291–308 (CPQCRAKYCELPVECKIC).

This sequence belongs to the GTF2H2 family. Component of the TFIID-containing RNA polymerase II pre-initiation complex that is composed of TBP and at least GTF2A1, GTF2A2, GTF2E1, GTF2E2, GTF2F1, GTF2H2, GTF2H3, GTF2H4, GTF2H5, GTF2B, TCEA1, ERCC2 and ERCC3. Component of the 7-subunit TFIIH core complex composed of XPB/ERCC3, XPD/ERCC2, GTF2H1, GTF2H2, GTF2H3, GTF2H4 and GTF2H5, which is active in NER. The core complex associates with the 3-subunit CDK-activating kinase (CAK) module composed of CCNH/cyclin H, CDK7 and MNAT1 to form the 10-subunit holoenzyme (holo-TFIIH) active in transcription. Interacts with XPB, XPD, GTF2H1 and GTF2H3. In terms of assembly, (Microbial infection) Interacts with varicella-zoster virus IE63 protein. In terms of tissue distribution, widely expressed, with higher expression in skeletal muscle.

The protein localises to the nucleus. In terms of biological role, component of the general transcription and DNA repair factor IIH (TFIIH) core complex, which is involved in general and transcription-coupled nucleotide excision repair (NER) of damaged DNA and, when complexed to CAK, in RNA transcription by RNA polymerase II. In NER, TFIIH acts by opening DNA around the lesion to allow the excision of the damaged oligonucleotide and its replacement by a new DNA fragment. In transcription, TFIIH has an essential role in transcription initiation. When the pre-initiation complex (PIC) has been established, TFIIH is required for promoter opening and promoter escape. Phosphorylation of the C-terminal tail (CTD) of the largest subunit of RNA polymerase II by the kinase module CAK controls the initiation of transcription. The N-terminus of GTF2H2 interacts with and regulates XPD whereas an intact C-terminus is required for a successful escape of RNAP II form the promoter. In Homo sapiens (Human), this protein is General transcription factor IIH subunit 2 (GTF2H2).